A 110-amino-acid chain; its full sequence is Iron-sulfur cluster assembly protein CyaY (110 aa).

The protein belongs to the frataxin family.

Its function is as follows. Involved in iron-sulfur (Fe-S) cluster assembly. May act as a regulator of Fe-S biogenesis. The polypeptide is Iron-sulfur cluster assembly protein CyaY (Ectopseudomonas mendocina (strain ymp) (Pseudomonas mendocina)).